The following is a 437-amino-acid chain: Elongation factor 1-gamma-B (437 aa).

The GST N-terminal domain maps to 2–87 (AGGTLYTYPD…YVANDELRGS (86 aa)). The GST C-terminal domain occupies 89 to 222 (NRLHQAQVIQ…KMAQFDAKKF (134 aa)). Basic and acidic residues predominate over residues 225–240 (VQPKKETPKKEKPAKE). Positions 225 to 279 (VQPKKETPKKEKPAKEPKKKKKKKKKATPAPAPAPEDDLDESEKALAAEPKSKDP) are disordered. The span at 241 to 251 (PKKKKKKKKKA) shows a compositional bias: basic residues. Positions 266–279 (SEKALAAEPKSKDP) are enriched in basic and acidic residues. An EF-1-gamma C-terminal domain is found at 276–437 (SKDPYAHLPK…KAFNQGKIFK (162 aa)).

EF-1 is composed of four subunits: alpha, beta, delta, and gamma.

Functionally, probably plays a role in anchoring the complex to other cellular components. The chain is Elongation factor 1-gamma-B (eef1g-b) from Xenopus laevis (African clawed frog).